Consider the following 409-residue polypeptide: Argininosuccinate synthase (409 aa).

ATP is bound by residues 11–19 (AYSGGLDTS) and Ala38. Tyr91 and Ser96 together coordinate L-citrulline. Gly121 provides a ligand contact to ATP. Thr123, Asn127, and Asp128 together coordinate L-aspartate. Asn127 provides a ligand contact to L-citrulline. L-citrulline-binding residues include Arg131, Ser182, Ser191, Glu267, and Tyr279.

The protein belongs to the argininosuccinate synthase family. Type 1 subfamily. In terms of assembly, homotetramer.

It localises to the cytoplasm. The catalysed reaction is L-citrulline + L-aspartate + ATP = 2-(N(omega)-L-arginino)succinate + AMP + diphosphate + H(+). Its pathway is amino-acid biosynthesis; L-arginine biosynthesis; L-arginine from L-ornithine and carbamoyl phosphate: step 2/3. This is Argininosuccinate synthase from Xanthobacter autotrophicus (strain ATCC BAA-1158 / Py2).